The primary structure comprises 360 residues: Mitogen-activated protein kinase 14 (360 aa).

Residue S2 is modified to N-acetylserine. S2 bears the Phosphoserine mark. Residue T16 is modified to Phosphothreonine. One can recognise a Protein kinase domain in the interval 24 to 308; sequence YQNLSPVGSG…AAQALAHAYF (285 aa). ATP contacts are provided by residues 30 to 38 and K53; that span reads VGSGAYGSV. K53 bears the N6-acetyllysine mark. The active-site Proton acceptor is the D150. K152 is subject to N6-acetyllysine. T180 is modified (phosphothreonine). Residues 180 to 182 carry the TXY motif; sequence TGY. At Y182 the chain carries Phosphotyrosine. Y323 bears the Phosphotyrosine; by ZAP70 mark.

It belongs to the protein kinase superfamily. CMGC Ser/Thr protein kinase family. MAP kinase subfamily. As to quaternary structure, component of a signaling complex containing at least AKAP13, PKN1, MAPK14, ZAK and MAP2K3. Within this complex, AKAP13 interacts directly with PKN1, which in turn recruits MAPK14, MAP2K3 and ZAK. Binds to a kinase interaction motif within the protein tyrosine phosphatase, PTPRR. This interaction retains MAPK14 in the cytoplasm and prevents nuclear accumulation. Interacts with SPAG9 and GADD45A. Interacts with CDC25B, CDC25C, DUSP1, DUSP10, DUSP16, NP60, SUPT20H and TAB1. Interacts with casein kinase II subunits CSNK2A1 and CSNK2B. Interacts with PPM1D. Interacts with CDK5RAP3; recruits PPM1D to MAPK14 and may regulate its dephosphorylation. Interacts with DUSP2; this interaction does not lead to catalytic activation of DUSP2 and dephosphrylation of MAPK14. It depends on Mg(2+) as a cofactor. Dually phosphorylated on Thr-180 and Tyr-182 by the MAP2Ks MAP2K3/MKK3, MAP2K4/MKK4 and MAP2K6/MKK6 in response to inflammatory cytokines, environmental stress or growth factors, which activates the enzyme. Dual phosphorylation can also be mediated by TAB1-mediated autophosphorylation. TCR engagement in T-cells also leads to Tyr-323 phosphorylation by ZAP70. Dephosphorylated and inactivated by DUPS1, DUSP10 and DUSP16. PPM1D also mediates dephosphorylation and inactivation of MAPK14. In terms of processing, acetylated at Lys-53 and Lys-152 by KAT2B and EP300. Acetylation at Lys-53 increases the affinity for ATP and enhances kinase activity. Lys-53 and Lys-152 are deacetylated by HDAC3. Post-translationally, ubiquitinated. Ubiquitination leads to degradation by the proteasome pathway.

The protein resides in the cytoplasm. It is found in the nucleus. The enzyme catalyses L-seryl-[protein] + ATP = O-phospho-L-seryl-[protein] + ADP + H(+). It carries out the reaction L-threonyl-[protein] + ATP = O-phospho-L-threonyl-[protein] + ADP + H(+). With respect to regulation, activated by cell stresses such as DNA damage, heat shock, osmotic shock, anisomycin and sodium arsenite, as well as pro-inflammatory stimuli such as bacterial lipopolysaccharide (LPS) and interleukin-1. Activation occurs through dual phosphorylation of Thr-180 and Tyr-182 by either of two dual specificity kinases, MAP2K3/MKK3 or MAP2K6/MKK6, and potentially also MAP2K4/MKK4, as well as by TAB1-mediated autophosphorylation. MAPK14 phosphorylated on both Thr-180 and Tyr-182 is 10-20-fold more active than MAPK14 phosphorylated only on Thr-180, whereas MAPK14 phosphorylated on Tyr-182 alone is inactive. whereas Thr-180 is necessary for catalysis, Tyr-182 may be required for auto-activation and substrate recognition. Phosphorylated at Tyr-323 by ZAP70 in an alternative activation pathway in response to TCR signaling in T-cells. This alternative pathway is inhibited by GADD45A. Inhibited by dual specificity phosphatases, such as DUSP1, DUSP10, and DUSP16. Specifically inhibited by the binding of pyridinyl-imidazole compounds, which are cytokine-suppressive anti-inflammatory drugs (CSAID). SB203580 is an inhibitor of MAPK14. Functionally, serine/threonine kinase which acts as an essential component of the MAP kinase signal transduction pathway. MAPK14 is one of the four p38 MAPKs which play an important role in the cascades of cellular responses evoked by extracellular stimuli such as pro-inflammatory cytokines or physical stress leading to direct activation of transcription factors. Accordingly, p38 MAPKs phosphorylate a broad range of proteins and it has been estimated that they may have approximately 200 to 300 substrates each. Some of the targets are downstream kinases which are activated through phosphorylation and further phosphorylate additional targets. RPS6KA5/MSK1 and RPS6KA4/MSK2 can directly phosphorylate and activate transcription factors such as CREB1, ATF1, the NF-kappa-B isoform RELA/NFKB3, STAT1 and STAT3, but can also phosphorylate histone H3 and the nucleosomal protein HMGN1. RPS6KA5/MSK1 and RPS6KA4/MSK2 play important roles in the rapid induction of immediate-early genes in response to stress or mitogenic stimuli, either by inducing chromatin remodeling or by recruiting the transcription machinery. On the other hand, two other kinase targets, MAPKAPK2/MK2 and MAPKAPK3/MK3, participate in the control of gene expression mostly at the post-transcriptional level, by phosphorylating ZFP36 (tristetraprolin) and ELAVL1, and by regulating EEF2K, which is important for the elongation of mRNA during translation. MKNK1/MNK1 and MKNK2/MNK2, two other kinases activated by p38 MAPKs, regulate protein synthesis by phosphorylating the initiation factor EIF4E2. MAPK14 also interacts with casein kinase II, leading to its activation through autophosphorylation and further phosphorylation of TP53/p53. In the cytoplasm, the p38 MAPK pathway is an important regulator of protein turnover. For example, CFLAR is an inhibitor of TNF-induced apoptosis whose proteasome-mediated degradation is regulated by p38 MAPK phosphorylation. In a similar way, MAPK14 phosphorylates the ubiquitin ligase SIAH2, regulating its activity towards EGLN3. MAPK14 may also inhibit the lysosomal degradation pathway of autophagy by interfering with the intracellular trafficking of the transmembrane protein ATG9. Another function of MAPK14 is to regulate the endocytosis of membrane receptors by different mechanisms that impinge on the small GTPase RAB5A. In addition, clathrin-mediated EGFR internalization induced by inflammatory cytokines and UV irradiation depends on MAPK14-mediated phosphorylation of EGFR itself as well as of RAB5A effectors. Ectodomain shedding of transmembrane proteins is regulated by p38 MAPKs as well. In response to inflammatory stimuli, p38 MAPKs phosphorylate the membrane-associated metalloprotease ADAM17. Such phosphorylation is required for ADAM17-mediated ectodomain shedding of TGF-alpha family ligands, which results in the activation of EGFR signaling and cell proliferation. Another p38 MAPK substrate is FGFR1. FGFR1 can be translocated from the extracellular space into the cytosol and nucleus of target cells, and regulates processes such as rRNA synthesis and cell growth. FGFR1 translocation requires p38 MAPK activation. In the nucleus, many transcription factors are phosphorylated and activated by p38 MAPKs in response to different stimuli. Classical examples include ATF1, ATF2, ATF6, ELK1, PTPRH, DDIT3, TP53/p53 and MEF2C and MEF2A. The p38 MAPKs are emerging as important modulators of gene expression by regulating chromatin modifiers and remodelers. The promoters of several genes involved in the inflammatory response, such as IL6, IL8 and IL12B, display a p38 MAPK-dependent enrichment of histone H3 phosphorylation on 'Ser-10' (H3S10ph) in LPS-stimulated myeloid cells. This phosphorylation enhances the accessibility of the cryptic NF-kappa-B-binding sites marking promoters for increased NF-kappa-B recruitment. Phosphorylates CDC25B and CDC25C which is required for binding to 14-3-3 proteins and leads to initiation of a G2 delay after ultraviolet radiation. Phosphorylates TIAR following DNA damage, releasing TIAR from GADD45A mRNA and preventing mRNA degradation. The p38 MAPKs may also have kinase-independent roles, which are thought to be due to the binding to targets in the absence of phosphorylation. Protein O-Glc-N-acylation catalyzed by the OGT is regulated by MAPK14, and, although OGT does not seem to be phosphorylated by MAPK14, their interaction increases upon MAPK14 activation induced by glucose deprivation. This interaction may regulate OGT activity by recruiting it to specific targets such as neurofilament H, stimulating its O-Glc-N-acylation. Required in mid-fetal development for the growth of embryo-derived blood vessels in the labyrinth layer of the placenta. Also plays an essential role in developmental and stress-induced erythropoiesis, through regulation of EPO gene expression. Phosphorylates S100A9 at 'Thr-113'. This Rattus norvegicus (Rat) protein is Mitogen-activated protein kinase 14.